A 236-amino-acid chain; its full sequence is Purine nucleoside phosphorylase CA_C1699 (236 aa).

Zn(2+) is bound by residues His62, Cys97, and His114.

Belongs to the purine nucleoside phosphorylase YfiH/LACC1 family. In terms of assembly, homodimer. Cu(2+) serves as cofactor. It depends on Zn(2+) as a cofactor.

The enzyme catalyses adenosine + phosphate = alpha-D-ribose 1-phosphate + adenine. It carries out the reaction S-methyl-5'-thioadenosine + phosphate = 5-(methylsulfanyl)-alpha-D-ribose 1-phosphate + adenine. It catalyses the reaction inosine + phosphate = alpha-D-ribose 1-phosphate + hypoxanthine. The catalysed reaction is adenosine + H2O + H(+) = inosine + NH4(+). In terms of biological role, purine nucleoside enzyme that catalyzes the phosphorolysis of adenosine and inosine nucleosides, yielding D-ribose 1-phosphate and the respective free bases, adenine and hypoxanthine. Also catalyzes the phosphorolysis of S-methyl-5'-thioadenosine into adenine and S-methyl-5-thio-alpha-D-ribose 1-phosphate. Also has adenosine deaminase activity. The chain is Purine nucleoside phosphorylase CA_C1699 from Clostridium acetobutylicum (strain ATCC 824 / DSM 792 / JCM 1419 / IAM 19013 / LMG 5710 / NBRC 13948 / NRRL B-527 / VKM B-1787 / 2291 / W).